A 357-amino-acid polypeptide reads, in one-letter code: UDP-N-acetylglucosamine--N-acetylmuramyl-(pentapeptide) pyrophosphoryl-undecaprenol N-acetylglucosamine transferase (357 aa).

UDP-N-acetyl-alpha-D-glucosamine-binding positions include T11–G13, N120, R161, S188, and Q281.

It belongs to the glycosyltransferase 28 family. MurG subfamily.

Its subcellular location is the cell inner membrane. It carries out the reaction di-trans,octa-cis-undecaprenyl diphospho-N-acetyl-alpha-D-muramoyl-L-alanyl-D-glutamyl-meso-2,6-diaminopimeloyl-D-alanyl-D-alanine + UDP-N-acetyl-alpha-D-glucosamine = di-trans,octa-cis-undecaprenyl diphospho-[N-acetyl-alpha-D-glucosaminyl-(1-&gt;4)]-N-acetyl-alpha-D-muramoyl-L-alanyl-D-glutamyl-meso-2,6-diaminopimeloyl-D-alanyl-D-alanine + UDP + H(+). It participates in cell wall biogenesis; peptidoglycan biosynthesis. Functionally, cell wall formation. Catalyzes the transfer of a GlcNAc subunit on undecaprenyl-pyrophosphoryl-MurNAc-pentapeptide (lipid intermediate I) to form undecaprenyl-pyrophosphoryl-MurNAc-(pentapeptide)GlcNAc (lipid intermediate II). The chain is UDP-N-acetylglucosamine--N-acetylmuramyl-(pentapeptide) pyrophosphoryl-undecaprenol N-acetylglucosamine transferase from Prochlorococcus marinus (strain SARG / CCMP1375 / SS120).